We begin with the raw amino-acid sequence, 363 residues long: UDP-N-acetylglucosamine--N-acetylmuramyl-(pentapeptide) pyrophosphoryl-undecaprenol N-acetylglucosamine transferase (363 aa).

UDP-N-acetyl-alpha-D-glucosamine is bound by residues 14–16 (TGG), asparagine 122, arginine 163, serine 190, and glutamine 285.

This sequence belongs to the glycosyltransferase 28 family. MurG subfamily.

It localises to the cell inner membrane. It catalyses the reaction di-trans,octa-cis-undecaprenyl diphospho-N-acetyl-alpha-D-muramoyl-L-alanyl-D-glutamyl-meso-2,6-diaminopimeloyl-D-alanyl-D-alanine + UDP-N-acetyl-alpha-D-glucosamine = di-trans,octa-cis-undecaprenyl diphospho-[N-acetyl-alpha-D-glucosaminyl-(1-&gt;4)]-N-acetyl-alpha-D-muramoyl-L-alanyl-D-glutamyl-meso-2,6-diaminopimeloyl-D-alanyl-D-alanine + UDP + H(+). The protein operates within cell wall biogenesis; peptidoglycan biosynthesis. In terms of biological role, cell wall formation. Catalyzes the transfer of a GlcNAc subunit on undecaprenyl-pyrophosphoryl-MurNAc-pentapeptide (lipid intermediate I) to form undecaprenyl-pyrophosphoryl-MurNAc-(pentapeptide)GlcNAc (lipid intermediate II). The chain is UDP-N-acetylglucosamine--N-acetylmuramyl-(pentapeptide) pyrophosphoryl-undecaprenol N-acetylglucosamine transferase from Prochlorococcus marinus (strain MIT 9312).